A 1311-amino-acid polypeptide reads, in one-letter code: Transcriptional regulator ATRX homolog (1311 aa).

The interval 1-384 (MGKKNPNARH…KQKNKRKHIR (384 aa)) is disordered. Residues 28–40 (SRRESATESKSAS) are compositionally biased toward basic and acidic residues. Residues 61–83 (KASGKATVSSSSDSDQAVANSSA) show a composition bias toward low complexity. Polar residues predominate over residues 114-125 (RGSQQKNVTIND). A phosphoserine mark is found at Ser-126 and Ser-127. The span at 155-166 (SDSEEVDEEEES) shows a compositional bias: acidic residues. Residues 181–202 (KPEKNSSKASKESIEKRQKAQK) show a composition bias toward basic and acidic residues. The segment covering 219–237 (RRGSLSSERSSRASSSRAE) has biased composition (low complexity). A compositionally biased stretch (basic residues) spans 241–265 (RPKRCVVRLKRVSLPKTKPAQKPKK). Phosphoserine is present on residues Ser-267, Ser-268, and Ser-270. The span at 290–306 (EADSDYEAPAAEEEEEE) shows a compositional bias: acidic residues. A phosphoserine mark is found at Ser-336, Ser-338, Ser-342, and Ser-343. The segment covering 336 to 351 (SESDKGSSDFEPEEKQ) has biased composition (basic and acidic residues). Positions 352-361 (KKKGRKRIKK) are enriched in basic residues. One can recognise a Helicase ATP-binding domain in the interval 476–664 (ESQEKPGSGC…YCMIQFVKPN (189 aa)). 489-496 (HCMGLGKT) is an ATP binding site. The DEGH box motif lies at 615 to 618 (DEGH). The interval 837–878 (ASSGKVKKRKTRNGNAGGGDSDSDLEMLGGLGGGSSVQKDDP) is disordered. A phosphoserine mark is found at Ser-857 and Ser-859. One can recognise a Helicase C-terminal domain in the interval 905–1085 (RLLQQCEAIG…SRHYNQTDLM (181 aa)). The tract at residues 1285–1311 (MAGGSVAHGPPAAPAPGFEPDKVYEID) is disordered.

This sequence belongs to the SNF2/RAD54 helicase family.

It localises to the nucleus. The protein localises to the chromosome. The enzyme catalyses ATP + H2O = ADP + phosphate + H(+). In terms of biological role, global transcriptional regulator. Modifies gene expression by affecting chromatin. This Drosophila melanogaster (Fruit fly) protein is Transcriptional regulator ATRX homolog (XNP).